The following is a 307-amino-acid chain: Serine/threonine-protein phosphatase 4 catalytic subunit (307 aa).

Ala-2 carries the post-translational modification N-acetylalanine. Mn(2+)-binding residues include Asp-54, His-56, Asp-82, and Asn-114. The Proton donor role is filled by His-115. Positions 164 and 238 each coordinate Mn(2+). A Leucine methyl ester modification is found at Leu-307.

Belongs to the PPP phosphatase family. PP-4 (PP-X) subfamily. Serine/threonine-protein phosphatase 4 (PP4) occurs in different assemblies of the catalytic and one or more regulatory subunits. Component of the PP4 complexes PPP4C-PPP4R1, PPP4C-PPP4R2, PPP4C-PPP4R2-PPP4R3A, PPP4C-PPP4R2-PPP4R3B and PPP4C-PPP4R4. The PPP4C-PPP4R2 complex appears to be a tetramer composed of 2 molecules of PPP4C and 2 molecules of PPP4R2. Interacts with REL, NFKB1/p50 and RELA. Interacts with SMN1 and GEMIN4. Interacts with IRS4 (phosphorylated). Interacts with SMEK1/PPP4R3A; the interaction requires PP4R2. Interacts with HDAC3. Requires Mn(2+) as cofactor. Post-translationally, methylation at the C-terminal Leu-307 is critical for interactions with regulatory subunits and functions in DNA repair.

Its subcellular location is the cytoplasm. The protein resides in the nucleus. It is found in the cytoskeleton. It localises to the microtubule organizing center. The protein localises to the centrosome. The enzyme catalyses O-phospho-L-seryl-[protein] + H2O = L-seryl-[protein] + phosphate. It carries out the reaction O-phospho-L-threonyl-[protein] + H2O = L-threonyl-[protein] + phosphate. Functionally, protein phosphatase that is involved in many processes such as microtubule organization at centrosomes, maturation of spliceosomal snRNPs, apoptosis, DNA repair, tumor necrosis factor (TNF)-alpha signaling, activation of c-Jun N-terminal kinase MAPK8, regulation of histone acetylation, DNA damage checkpoint signaling, NF-kappa-B activation and cell migration. The PPP4C-PPP4R1 PP4 complex may play a role in dephosphorylation and regulation of HDAC3. The PPP4C-PPP4R2-PPP4R3A PP4 complex specifically dephosphorylates H2AX phosphorylated on Ser-140 (gamma-H2AX) generated during DNA replication and required for DNA DSB repair. Dephosphorylates NDEL1 at CDK1 phosphorylation sites and negatively regulates CDK1 activity in interphase. In response to DNA damage, catalyzes RPA2 dephosphorylation, an essential step for DNA repair since it allows the efficient RPA2-mediated recruitment of RAD51 to chromatin. In Rattus norvegicus (Rat), this protein is Serine/threonine-protein phosphatase 4 catalytic subunit (Ppp4c).